The primary structure comprises 722 residues: Polyribonucleotide nucleotidyltransferase (722 aa).

Mg(2+)-binding residues include Asp-486 and Asp-492. Residues 553–612 (PRITTIQIRPEFIKNVIGPGGKVIKDIIARTGAAINIEDSGRVDIASANGEAVKAAIAMI) enclose the KH domain. Residues 622-690 (GKIYTGTVRK…KTGKIRLSRK (69 aa)) form the S1 motif domain. The tract at residues 696 to 722 (RAAQQGAAAGEAAAQPAPAPTQPDAKA) is disordered.

It belongs to the polyribonucleotide nucleotidyltransferase family. Mg(2+) is required as a cofactor.

The protein localises to the cytoplasm. The catalysed reaction is RNA(n+1) + phosphate = RNA(n) + a ribonucleoside 5'-diphosphate. Involved in mRNA degradation. Catalyzes the phosphorolysis of single-stranded polyribonucleotides processively in the 3'- to 5'-direction. This chain is Polyribonucleotide nucleotidyltransferase, found in Myxococcus xanthus (strain DK1622).